We begin with the raw amino-acid sequence, 470 residues long: MIDKQVIVIGAGLAGCEAAWQIANSGIAVKLVEMRPLNSTPAHHTSEFAELVCSNSFGALSADRAAGLLQEELRTFNSLIIQTADKFSVPAGGALAVDRSKFSKSLTQTLSAHPFVEISRFEQLDLPNKKNITVLATGPLTSDELATKIKKFTGIDSCHFFDAASPIIYGDSINHEIVFKASRYDKGDPAYLNCPINKLDYFNFRNALINGEQASLKDFDKESANFFEACLPIEEIARRGIETMRYGPLKSIGLWNPNWGDLFDRENRLKKRPHAIVQLRKEDLEGKLLNMVGFQTNLKWSEQKRIFRMIPGLEKAEFVRFGVMHRNTFLESPKLLLPTLQFLKRETLFAAGQITGTEGYAAAAAGGLLAGINASLLAKNKNLVTFPNESMIGSLMNFISNRNEIMSNQKKNKFQPMPASFGLVPELTNKIKDKKLRYKAYQERSLKELQVFKKVLDASFKNDQLLVEIN.

An FAD-binding site is contributed by 10–15 (GAGLAG).

It belongs to the MnmG family. TrmFO subfamily. FAD serves as cofactor.

The protein resides in the cytoplasm. It carries out the reaction uridine(54) in tRNA + (6R)-5,10-methylene-5,6,7,8-tetrahydrofolate + NADH + H(+) = 5-methyluridine(54) in tRNA + (6S)-5,6,7,8-tetrahydrofolate + NAD(+). The catalysed reaction is uridine(54) in tRNA + (6R)-5,10-methylene-5,6,7,8-tetrahydrofolate + NADPH + H(+) = 5-methyluridine(54) in tRNA + (6S)-5,6,7,8-tetrahydrofolate + NADP(+). Catalyzes the folate-dependent formation of 5-methyl-uridine at position 54 (M-5-U54) in all tRNAs. The protein is Methylenetetrahydrofolate--tRNA-(uracil-5-)-methyltransferase TrmFO of Prochlorococcus marinus subsp. pastoris (strain CCMP1986 / NIES-2087 / MED4).